The primary structure comprises 247 residues: Chaperone protein AfaB (247 aa).

An N-terminal signal peptide occupies residues 1-29 (MKMRAVAVFTGMLTGVLSVAGLLSAGAYA).

Belongs to the periplasmic pilus chaperone family.

It localises to the periplasm. In terms of biological role, involved in the biogenesis of the AFA-III afimbrial adhesin. This chain is Chaperone protein AfaB (afaB), found in Escherichia coli.